The sequence spans 145 residues: Large ribosomal subunit protein bL19 (145 aa).

Residues 114–136 show a composition bias toward basic and acidic residues; it reads IAEKMESPAAKATREAAKKEAKA. Positions 114–145 are disordered; the sequence is IAEKMESPAAKATREAAKKEAKAAKKNAAPAE.

Belongs to the bacterial ribosomal protein bL19 family.

This protein is located at the 30S-50S ribosomal subunit interface and may play a role in the structure and function of the aminoacyl-tRNA binding site. This Methylocella silvestris (strain DSM 15510 / CIP 108128 / LMG 27833 / NCIMB 13906 / BL2) protein is Large ribosomal subunit protein bL19.